Consider the following 349-residue polypeptide: Anthranilate phosphoribosyltransferase (349 aa).

5-phospho-alpha-D-ribose 1-diphosphate contacts are provided by residues Gly82, 85-86, Thr90, 92-95, 110-118, and Gly122; these read GD, NVST, and KHGNRSVSS. Gly82 serves as a coordination point for anthranilate. Ser94 contributes to the Mg(2+) binding site. Asn113 lines the anthranilate pocket. Position 168 (Arg168) interacts with anthranilate. Mg(2+) contacts are provided by Asp232 and Glu233.

The protein belongs to the anthranilate phosphoribosyltransferase family. Homodimer. The cofactor is Mg(2+).

The enzyme catalyses N-(5-phospho-beta-D-ribosyl)anthranilate + diphosphate = 5-phospho-alpha-D-ribose 1-diphosphate + anthranilate. The protein operates within amino-acid biosynthesis; L-tryptophan biosynthesis; L-tryptophan from chorismate: step 2/5. In terms of biological role, catalyzes the transfer of the phosphoribosyl group of 5-phosphorylribose-1-pyrophosphate (PRPP) to anthranilate to yield N-(5'-phosphoribosyl)-anthranilate (PRA). This Methanosphaera stadtmanae (strain ATCC 43021 / DSM 3091 / JCM 11832 / MCB-3) protein is Anthranilate phosphoribosyltransferase.